The primary structure comprises 486 residues: Probable cytosol aminopeptidase (486 aa).

It belongs to the peptidase M17 family. Mn(2+) serves as cofactor.

The protein resides in the cytoplasm. It carries out the reaction Release of an N-terminal amino acid, Xaa-|-Yaa-, in which Xaa is preferably Leu, but may be other amino acids including Pro although not Arg or Lys, and Yaa may be Pro. Amino acid amides and methyl esters are also readily hydrolyzed, but rates on arylamides are exceedingly low.. The enzyme catalyses Release of an N-terminal amino acid, preferentially leucine, but not glutamic or aspartic acids.. Functionally, presumably involved in the processing and regular turnover of intracellular proteins. Catalyzes the removal of unsubstituted N-terminal amino acids from various peptides. The chain is Probable cytosol aminopeptidase (pepA) from Synechococcus elongatus (strain ATCC 33912 / PCC 7942 / FACHB-805) (Anacystis nidulans R2).